The primary structure comprises 530 residues: Histone-arginine methyltransferase CARMER (530 aa).

Residues 141–450 (ASQYFQFYGY…QSYDVTIDLH (310 aa)) form the SAM-dependent MTase PRMT-type domain. S-adenosyl-L-methionine is bound by residues Gln154, Arg163, Gly187, Glu209, Glu238, and Thr266. The residue at position 501 (Arg501) is an Asymmetric dimethylarginine; by autocatalysis.

The protein belongs to the class I-like SAM-binding methyltransferase superfamily. Protein arginine N-methyltransferase family. Homodimer. Post-translationally, the dimethylated protein is the major form.

The protein resides in the cytoplasm. It localises to the nucleus. The enzyme catalyses L-arginyl-[protein] + 2 S-adenosyl-L-methionine = N(omega),N(omega)-dimethyl-L-arginyl-[protein] + 2 S-adenosyl-L-homocysteine + 2 H(+). Methylates (mono- and asymmetric dimethylation) the guanidino nitrogens of arginyl residues in proteins. May methylate histone H3 at 'Arg-17' and activate transcription via chromatin remodeling. The protein is Histone-arginine methyltransferase CARMER (Art4) of Drosophila simulans (Fruit fly).